The primary structure comprises 2311 residues: C2 domain-containing protein 3 (2311 aa).

2 disordered regions span residues Ser447–Cys511 and Gly543–Arg562. Over residues Ile470–Ser509 the composition is skewed to basic and acidic residues. C2 domains are found at residues Thr508–Cys666, Gly751–Leu888, Leu952–Asp1112, Pro1136–Tyr1303, His1370–Val1505, and Lys1581–Tyr1713. A disordered region spans residues Gly939–Pro964. Disordered regions lie at residues Pro1536–Ala1589, Ser1955–Asn1977, Met2036–Pro2065, Asn2084–Leu2233, and Val2261–Glu2292. 2 stretches are compositionally biased toward basic and acidic residues: residues Phe1565–Ala1589 and Ser1955–Arg1964. Positions Met2036–Leu2047 are enriched in polar residues. Positions Ser2048 to Gln2059 are enriched in basic and acidic residues. A compositionally biased stretch (polar residues) spans Asn2084–Ser2095. A compositionally biased stretch (acidic residues) spans Ala2138 to Pro2151. Over residues Gly2221–Leu2233 the composition is skewed to polar residues.

Its subcellular location is the cytoplasm. It localises to the cytoskeleton. The protein resides in the cilium basal body. The protein localises to the microtubule organizing center. It is found in the centrosome. Its subcellular location is the centriole. Functionally, component of the centrioles that acts as a positive regulator of centriole elongation. Promotes assembly of centriolar distal appendage, a structure at the distal end of the mother centriole that acts as an anchor of the cilium. Required for primary cilium formation. The polypeptide is C2 domain-containing protein 3 (c2cd3) (Xenopus tropicalis (Western clawed frog)).